The following is a 661-amino-acid chain: Junctophilin-1 (661 aa).

Residues 1–639 lie on the Cytoplasmic side of the membrane; the sequence is MTGGRFDFDD…EKEANSGPNS (639 aa). MORN repeat units follow at residues 14–36, 38–59, 60–82, 106–128, and 129–151; these read YCGGWEEGKAHGHGICTGPKGQG, YSGSWSHGFEVVGGYTWPSGNT, YQGYWAQGKRHGLGVETKGKWMY, YEGTWSNGLQDGYGVETYGDGGT, and YQGQWAGGMRHGYGVRQSVPYGM. Residues Ser157, Ser216, and Ser220 each carry the phosphoserine modification. Positions 228–247 are disordered; that stretch reads SKSSISSKRSSVRSDAAMSR. MORN repeat units follow at residues 281–303 and 304–326; these read YMGEWKNDKRNGFGVSERSNGMK and YEGEWANNKRHGYGCTVFPDGSK. Positions 433–454 are enriched in basic and acidic residues; it reads DAKENPEEKVPEKPPTPKESPH. Residues 433–631 are disordered; that stretch reads DAKENPEEKV…SNDSCPALEK (199 aa). At Thr448 the chain carries Phosphothreonine. The residue at position 452 (Ser452) is a Phosphoserine. At Thr461 the chain carries Phosphothreonine. Residues Ser465, Ser469, and Ser475 each carry the phosphoserine modification. Over residues 599–613 the composition is skewed to basic and acidic residues; that stretch reads VAKESKAEPKAKKSE. The chain crosses the membrane as a helical; Anchor for type IV membrane protein span at residues 640-660; the sequence is IMIVLVMLLNIGLAILFVHFL.

This sequence belongs to the junctophilin family. Abundantly expressed in skeletal muscle. Very low levels in heart.

It localises to the cell membrane. It is found in the endoplasmic reticulum membrane. The protein localises to the sarcoplasmic reticulum membrane. Functionally, junctophilins contribute to the formation of junctional membrane complexes (JMCs) which link the plasma membrane with the endoplasmic or sarcoplasmic reticulum in excitable cells. Provides a structural foundation for functional cross-talk between the cell surface and intracellular calcium release channels. JPH1 contributes to the construction of the skeletal muscle triad by linking the t-tubule (transverse-tubule) and SR (sarcoplasmic reticulum) membranes. In Homo sapiens (Human), this protein is Junctophilin-1 (JPH1).